A 955-amino-acid chain; its full sequence is Thyroid hormone receptor-associated protein 3 (955 aa).

The tract at residues 1–94 is disordered; the sequence is MSKTNKSKSG…YFRGRNRGFY (94 aa). Ser-2 bears the N-acetylserine mark. The segment at 2-190 is required for mRNA splicing activation; that stretch reads SKTNKSKSGS…KSSSKDSRPS (189 aa). The span at 14–51 shows a compositional bias: basic residues; the sequence is SRSRSASRSRSRSFSKSRSRSRSLSRSRKRRLSSRSRS. Arg-17 is subject to Dimethylated arginine. The segment covering 58-75 has biased composition (basic and acidic residues); that stretch reads HNRERNHPRVYQNRDFRG. Asymmetric dimethylarginine is present on Arg-66. Residues 82–94 are compositionally biased toward low complexity; it reads RPYYFRGRNRGFY. An asymmetric dimethylarginine mark is found at Arg-101 and Arg-108. The interval 117 to 559 is disordered; that stretch reads AYSPRRGRSR…AKGDFPTGKS (443 aa). Positions 121 to 143 are enriched in basic residues; that stretch reads RRGRSRSRSPKRRSPSPRSRSHS. The segment covering 144-155 has biased composition (basic and acidic residues); it reads RNSDKSSSDRSR. Residues 157-166 are compositionally biased toward low complexity; that stretch reads SSSSRSSSNH. Positions 167–188 are enriched in basic and acidic residues; that stretch reads SRVESSKRKSAKEKKSSSKDSR. Residue Lys-202 forms a Glycyl lysine isopeptide (Lys-Gly) (interchain with G-Cter in SUMO1); alternate linkage. Lys-202 participates in a covalent cross-link: Glycyl lysine isopeptide (Lys-Gly) (interchain with G-Cter in SUMO2); alternate. Positions 204-220 are enriched in polar residues; sequence QTFSGGTSQDTKASESS. Lys-215 is covalently cross-linked (Glycyl lysine isopeptide (Lys-Gly) (interchain with G-Cter in SUMO2)). Ser-220 carries the post-translational modification Phosphoserine. A Glycyl lysine isopeptide (Lys-Gly) (interchain with G-Cter in SUMO2); alternate cross-link involves residue Lys-221. Residue Lys-221 is modified to N6-acetyllysine; alternate. Ser-232, Ser-237, Ser-240, Ser-243, and Ser-248 each carry phosphoserine. Residue Lys-252 forms a Glycyl lysine isopeptide (Lys-Gly) (interchain with G-Cter in SUMO2); alternate linkage. Lys-252 bears the N6-methyllysine; alternate mark. 2 positions are modified to phosphoserine: Ser-253 and Ser-257. Residues 266-276 are compositionally biased toward pro residues; the sequence is RPSPVPKPSPP. Positions 282–300 are enriched in polar residues; that stretch reads QMGSTLPSGAGYQSGTHQG. A compositionally biased stretch (low complexity) spans 305–331; that stretch reads GSGSLSPSKKSPVGKSPPSTGSTYGSS. Phosphoserine occurs at positions 315, 320, and 323. Position 324 is a phosphothreonine (Thr-324). Ser-326 is modified (phosphoserine). Residue Tyr-328 is modified to Phosphotyrosine. Lys-333 is covalently cross-linked (Glycyl lysine isopeptide (Lys-Gly) (interchain with G-Cter in SUMO2)). Position 339 is a phosphoserine (Ser-339). Lys-346 is covalently cross-linked (Glycyl lysine isopeptide (Lys-Gly) (interchain with G-Cter in SUMO2); alternate). Lys-346 bears the N6-acetyllysine; alternate mark. Residues 347–377 are compositionally biased toward basic and acidic residues; the sequence is RYLEEQKTENGKDKEQKQTNTDKEKIKEKGS. Glycyl lysine isopeptide (Lys-Gly) (interchain with G-Cter in SUMO2) cross-links involve residues Lys-353 and Lys-375. The interval 359–955 is required for mRNA decay activity; the sequence is DKEQKQTNTD…EKDNIQPTTE (597 aa). Phosphoserine occurs at positions 377 and 379. Lys-387 is covalently cross-linked (Glycyl lysine isopeptide (Lys-Gly) (interchain with G-Cter in SUMO1); alternate). Lys-387 participates in a covalent cross-link: Glycyl lysine isopeptide (Lys-Gly) (interchain with G-Cter in SUMO2); alternate. Glycyl lysine isopeptide (Lys-Gly) (interchain with G-Cter in SUMO2) cross-links involve residues Lys-389 and Lys-396. Thr-397 bears the Phosphothreonine mark. Residue Lys-401 forms a Glycyl lysine isopeptide (Lys-Gly) (interchain with G-Cter in SUMO2) linkage. Ser-406 and Ser-408 each carry phosphoserine. The span at 414–452 shows a compositional bias: basic and acidic residues; that stretch reads LRDDFEKKMADFHKEEMDDQDKDKAKGRKESEFDDEPKF. Residues Lys-421 and Lys-427 each participate in a glycyl lysine isopeptide (Lys-Gly) (interchain with G-Cter in SUMO2) cross-link. Position 444 is a phosphoserine (Ser-444). Residue Lys-451 forms a Glycyl lysine isopeptide (Lys-Gly) (interchain with G-Cter in SUMO1); alternate linkage. Glycyl lysine isopeptide (Lys-Gly) (interchain with G-Cter in SUMO2); alternate cross-links involve residues Lys-451 and Lys-455. The residue at position 455 (Lys-455) is an N6-acetyllysine; alternate. Residues Lys-461 and Lys-467 each participate in a glycyl lysine isopeptide (Lys-Gly) (interchain with G-Cter in SUMO2) cross-link. Ser-468 is modified (phosphoserine). Residues Lys-470 and Lys-481 each participate in a glycyl lysine isopeptide (Lys-Gly) (interchain with G-Cter in SUMO2); alternate cross-link. N6-acetyllysine; alternate is present on residues Lys-470 and Lys-481. Residue Lys-486 forms a Glycyl lysine isopeptide (Lys-Gly) (interchain with G-Cter in SUMO2) linkage. Residues 495–521 are compositionally biased toward basic and acidic residues; sequence FPERSKKEDRGKRSEGGHRGFVPEKNF. The residue at position 519 (Lys-519) is an N6-acetyllysine. Residue Lys-527 forms a Glycyl lysine isopeptide (Lys-Gly) (interchain with G-Cter in SUMO2); alternate linkage. Lys-527 is subject to N6-acetyllysine; alternate. Ser-535 bears the Phosphoserine mark. The span at 540-550 shows a compositional bias: basic and acidic residues; the sequence is KTSESRDKLGA. A Glycyl lysine isopeptide (Lys-Gly) (interchain with G-Cter in SUMO2) cross-link involves residue Lys-551. Residue 552 to 559 coordinates ATP; sequence GDFPTGKS. A Glycyl lysine isopeptide (Lys-Gly) (interchain with G-Cter in SUMO2); alternate cross-link involves residue Lys-558. Lys-558 carries the N6-acetyllysine; alternate modification. Ser-560, Ser-562, and Ser-575 each carry phosphoserine. Lys-602 is covalently cross-linked (Glycyl lysine isopeptide (Lys-Gly) (interchain with G-Cter in SUMO2)). Ser-619, Ser-622, Ser-672, Ser-682, and Ser-684 each carry phosphoserine. Residues 663-680 show a composition bias toward basic and acidic residues; it reads EQEAAKNKKSPEIHRRID. Positions 663–955 are disordered; the sequence is EQEAAKNKKS…EKDNIQPTTE (293 aa). Residues 691 to 761 show a composition bias toward basic and acidic residues; the sequence is LAHDEMKSPR…RSAEKTEKTH (71 aa). Lys-697 participates in a covalent cross-link: Glycyl lysine isopeptide (Lys-Gly) (interchain with G-Cter in SUMO2). Phosphoserine is present on Ser-698. Residues Lys-705, Lys-709, Lys-711, Lys-756, and Lys-759 each participate in a glycyl lysine isopeptide (Lys-Gly) (interchain with G-Cter in SUMO2) cross-link. The segment covering 762-775 has biased composition (basic residues); sequence KGSKKQKKHRRARD. The span at 779-789 shows a compositional bias: low complexity; it reads SSSSSSQSSHS. At Lys-811 the chain carries N6-acetyllysine. Arg-845 bears the Asymmetric dimethylarginine mark. Positions 848 to 859 are enriched in low complexity; sequence YSGNNNNNSNND. Thr-874 is subject to Phosphothreonine. Residues Lys-876 and Lys-879 each participate in a glycyl lysine isopeptide (Lys-Gly) (interchain with G-Cter in SUMO2) cross-link. Residues 881–895 are compositionally biased toward basic and acidic residues; sequence YLHDDREGEGSDKWV. 2 positions are modified to phosphoserine: Ser-928 and Ser-939. Residues 930–940 are compositionally biased toward acidic residues; the sequence is EEGEIEDDESG.

This sequence belongs to the BCLAF1/THRAP3 family. Associated with the large multiprotein complex TRAP (Mediator complex-like). Interacts with SFPQ; the interaction is dependent on SFPQ phosphorylation at 'Thr-687' and inhibits binding of SFPQ to an ESS1 exonic splicing silencer element-containing RNA. Interacts with NXF1. Component of the SNARP complex which consists at least of SNIP1, SNW1, THRAP3, BCLAF1 and PNN. Associated with spliced mRNP complexes. Interacts with HELZ2 and PPARG. Interacts with CLOCK and BMAL1. Component of a MACOM-like complex, named WTAP complex, composed of WTAP, ZC3H13, CBLL1, KIAA1429, RBM15, BCLAF1 and THRAP3. ADP-ribosylation during genotoxic stress promotes accumulation in nuclear speckles. In terms of tissue distribution, ubiquitous.

The protein localises to the nucleus. It localises to the nucleoplasm. It is found in the nucleus speckle. Functionally, involved in pre-mRNA splicing. Remains associated with spliced mRNA after splicing which probably involves interactions with the exon junction complex (EJC). Can trigger mRNA decay which seems to be independent of nonsense-mediated decay involving premature stop codons (PTC) recognition. May be involved in nuclear mRNA decay. Involved in regulation of signal-induced alternative splicing. During splicing of PTPRC/CD45 is proposed to sequester phosphorylated SFPQ from PTPRC/CD45 pre-mRNA in resting T-cells. Involved in cyclin-D1/CCND1 mRNA stability probably by acting as component of the SNARP complex which associates with both the 3'end of the CCND1 gene and its mRNA. Involved in response to DNA damage. Is excluced from DNA damage sites in a manner that parallels transcription inhibition; the function may involve the SNARP complex. Initially thought to play a role in transcriptional coactivation through its association with the TRAP complex; however, it is not regarded as a stable Mediator complex subunit. Cooperatively with HELZ2, enhances the transcriptional activation mediated by PPARG, maybe through the stabilization of the PPARG binding to DNA in presence of ligand. May play a role in the terminal stage of adipocyte differentiation. Plays a role in the positive regulation of the circadian clock. Acts as a coactivator of the CLOCK-BMAL1 heterodimer and promotes its transcriptional activator activity and binding to circadian target genes. In Homo sapiens (Human), this protein is Thyroid hormone receptor-associated protein 3.